The sequence spans 210 residues: Ribosomal RNA large subunit methyltransferase E (210 aa).

Positions 61, 63, 81, 97, and 122 each coordinate S-adenosyl-L-methionine. Lys162 functions as the Proton acceptor in the catalytic mechanism.

The protein belongs to the class I-like SAM-binding methyltransferase superfamily. RNA methyltransferase RlmE family.

The protein resides in the cytoplasm. The catalysed reaction is uridine(2552) in 23S rRNA + S-adenosyl-L-methionine = 2'-O-methyluridine(2552) in 23S rRNA + S-adenosyl-L-homocysteine + H(+). Its function is as follows. Specifically methylates the uridine in position 2552 of 23S rRNA at the 2'-O position of the ribose in the fully assembled 50S ribosomal subunit. The sequence is that of Ribosomal RNA large subunit methyltransferase E from Xanthomonas oryzae pv. oryzae (strain MAFF 311018).